A 449-amino-acid polypeptide reads, in one-letter code: Ribulose bisphosphate carboxylase large chain (449 aa).

The propeptide occupies 1-2 (MS). Position 3 is an N-acetylproline (Pro3). N6,N6,N6-trimethyllysine is present on Lys14. Substrate-binding residues include Asn123 and Thr173. Residue Lys175 is the Proton acceptor of the active site. Lys177 is a binding site for substrate. Mg(2+) is bound by residues Lys201, Asp203, and Glu204. An N6-carboxylysine modification is found at Lys201. His294 serves as the catalytic Proton acceptor. Substrate is bound by residues Arg295, His327, and Ser379.

This sequence belongs to the RuBisCO large chain family. Type I subfamily. As to quaternary structure, heterohexadecamer of 8 large chains and 8 small chains; disulfide-linked. The disulfide link is formed within the large subunit homodimers. The cofactor is Mg(2+). Post-translationally, the disulfide bond which can form in the large chain dimeric partners within the hexadecamer appears to be associated with oxidative stress and protein turnover.

Its subcellular location is the plastid. The protein resides in the chloroplast. It catalyses the reaction 2 (2R)-3-phosphoglycerate + 2 H(+) = D-ribulose 1,5-bisphosphate + CO2 + H2O. The catalysed reaction is D-ribulose 1,5-bisphosphate + O2 = 2-phosphoglycolate + (2R)-3-phosphoglycerate + 2 H(+). Functionally, ruBisCO catalyzes two reactions: the carboxylation of D-ribulose 1,5-bisphosphate, the primary event in carbon dioxide fixation, as well as the oxidative fragmentation of the pentose substrate in the photorespiration process. Both reactions occur simultaneously and in competition at the same active site. This chain is Ribulose bisphosphate carboxylase large chain, found in Hippocratea richardiana.